The chain runs to 130 residues: Large ribosomal subunit protein bL20 (130 aa).

Belongs to the bacterial ribosomal protein bL20 family.

In terms of biological role, binds directly to 23S ribosomal RNA and is necessary for the in vitro assembly process of the 50S ribosomal subunit. It is not involved in the protein synthesizing functions of that subunit. This is Large ribosomal subunit protein bL20 from Solibacter usitatus (strain Ellin6076).